Here is a 158-residue protein sequence, read N- to C-terminus: NADH-quinone oxidoreductase subunit B (158 aa).

Residues Cys-37, Cys-38, Cys-102, and Cys-132 each contribute to the [4Fe-4S] cluster site.

The protein belongs to the complex I 20 kDa subunit family. NDH-1 is composed of 14 different subunits. Subunits NuoB, C, D, E, F, and G constitute the peripheral sector of the complex. [4Fe-4S] cluster serves as cofactor.

Its subcellular location is the cell inner membrane. It catalyses the reaction a quinone + NADH + 5 H(+)(in) = a quinol + NAD(+) + 4 H(+)(out). In terms of biological role, NDH-1 shuttles electrons from NADH, via FMN and iron-sulfur (Fe-S) centers, to quinones in the respiratory chain. Couples the redox reaction to proton translocation (for every two electrons transferred, four hydrogen ions are translocated across the cytoplasmic membrane), and thus conserves the redox energy in a proton gradient. The sequence is that of NADH-quinone oxidoreductase subunit B from Bordetella petrii (strain ATCC BAA-461 / DSM 12804 / CCUG 43448).